A 195-amino-acid polypeptide reads, in one-letter code: Large ribosomal subunit protein uL5 (195 aa).

This sequence belongs to the universal ribosomal protein uL5 family. In terms of assembly, part of the 50S ribosomal subunit; part of the 5S rRNA/L5/L18/L25 subcomplex. Contacts the 5S rRNA and the P site tRNA. Forms a bridge to the 30S subunit in the 70S ribosome.

In terms of biological role, this is one of the proteins that bind and probably mediate the attachment of the 5S RNA into the large ribosomal subunit, where it forms part of the central protuberance. In the 70S ribosome it contacts protein S13 of the 30S subunit (bridge B1b), connecting the 2 subunits; this bridge is implicated in subunit movement. Contacts the P site tRNA; the 5S rRNA and some of its associated proteins might help stabilize positioning of ribosome-bound tRNAs. This Leifsonia xyli subsp. xyli (strain CTCB07) protein is Large ribosomal subunit protein uL5.